The sequence spans 260 residues: Rhythmically expressed gene 2 protein (260 aa).

The protein is Rhythmically expressed gene 2 protein (Reg-2) of Drosophila melanogaster (Fruit fly).